Reading from the N-terminus, the 545-residue chain is Chaperonin GroEL (545 aa).

ATP-binding positions include 30–33 (TLGP), K51, 87–91 (DGTTT), G415, and D495.

The protein belongs to the chaperonin (HSP60) family. As to quaternary structure, forms a cylinder of 14 subunits composed of two heptameric rings stacked back-to-back. Interacts with the co-chaperonin GroES.

It is found in the cytoplasm. The catalysed reaction is ATP + H2O + a folded polypeptide = ADP + phosphate + an unfolded polypeptide.. Together with its co-chaperonin GroES, plays an essential role in assisting protein folding. The GroEL-GroES system forms a nano-cage that allows encapsulation of the non-native substrate proteins and provides a physical environment optimized to promote and accelerate protein folding. This chain is Chaperonin GroEL, found in Shewanella sp. (strain MR-7).